The sequence spans 79 residues: Hematopoietic cell signal transducer (79 aa).

The signal sequence occupies residues 1-18 (MVPPGNILFLLLLPVATA). Residues 19–35 (QMTPGSCSGCGPLSLPL) lie on the Extracellular side of the membrane. Residues 36–56 (LAGLVAADAVVSLLIVVVVFV) form a helical membrane-spanning segment. Topologically, residues 57 to 79 (CARLRSRPTQEDDKIYINMPGRG) are cytoplasmic. Tyr72 is subject to Phosphotyrosine. The interval 72–74 (YIN) is GRB2 binding site. Residues 72-75 (YINM) form a PIK3R1 binding site region.

Belongs to the DAP10 family. Homodimer; Disulfide-linked. Heterohexamer composed of four subunits of HCST/DAP10 and two subunits of KLRK1. Interacts (via transmembrane domain) with KLRK1 (via transmembrane domain); the interaction is required for KLRK1 NK cell surface and induces NK cell-mediated cytotoxicity. Interacts with PIK3R1 and GRB2. Interacts with CLEC5A. Forms an CLEC5A/TYROBP/HCST trimolecular complex depending almost solely on TYROBP. Interacts with KLRK1. Interacts with CD300H. Phosphorylated; PIK3R1 and GRB2 associate specifically with tyrosine-phosphorylated HCST. Post-translationally, O-glycosylated.

Its subcellular location is the membrane. Functionally, transmembrane adapter protein which associates with KLRK1 to form an activation receptor KLRK1-HCST in lymphoid and myeloid cells; this receptor plays a major role in triggering cytotoxicity against target cells expressing cell surface ligands such as MHC class I chain-related MICA and MICB, and UL16-binding proteins (ULBPs); these ligands are up-regulated by stress conditions and pathological state such as viral infection and tumor transformation. Functions as a docking site for PI3-kinase PIK3R1 and GRB2. Interaction of ULBPs with KLRK1-HCST triggers calcium mobilization and activation of the PIK3R1, MAP2K/ERK, and JAK2/STAT5 signaling pathways. Both PIK3R1 and GRB2 are required for full KLRK1-HCST-mediated activation and ultimate killing of target cells. In NK cells, KLRK1-HCST signaling directly induces cytotoxicity and enhances cytokine production initiated via DAP12/TYROBP-associated receptors. In T-cells, it provides primarily costimulation for TCR-induced signals. KLRK1-HCST receptor plays a role in immune surveillance against tumors and is required for cytolysis of tumors cells; indeed, melanoma cells that do not express KLRK1 ligands escape from immune surveillance mediated by NK cells. This chain is Hematopoietic cell signal transducer (HCST), found in Bos taurus (Bovine).